A 404-amino-acid polypeptide reads, in one-letter code: Cysteine desulfurase IscS (404 aa).

Pyridoxal 5'-phosphate contacts are provided by residues 75–76 (AT), Asn-155, Gln-183, and 203–205 (TSH). At Lys-206 the chain carries N6-(pyridoxal phosphate)lysine. Thr-243 lines the pyridoxal 5'-phosphate pocket. The active-site Cysteine persulfide intermediate is Cys-328. Cys-328 serves as a coordination point for [2Fe-2S] cluster.

Belongs to the class-V pyridoxal-phosphate-dependent aminotransferase family. NifS/IscS subfamily. As to quaternary structure, homodimer. Forms a heterotetramer with IscU, interacts with other sulfur acceptors. Pyridoxal 5'-phosphate serves as cofactor.

The protein resides in the cytoplasm. It carries out the reaction (sulfur carrier)-H + L-cysteine = (sulfur carrier)-SH + L-alanine. Its pathway is cofactor biosynthesis; iron-sulfur cluster biosynthesis. In terms of biological role, master enzyme that delivers sulfur to a number of partners involved in Fe-S cluster assembly, tRNA modification or cofactor biosynthesis. Catalyzes the removal of elemental sulfur atoms from cysteine to produce alanine. Functions as a sulfur delivery protein for Fe-S cluster synthesis onto IscU, an Fe-S scaffold assembly protein, as well as other S acceptor proteins. The sequence is that of Cysteine desulfurase IscS from Photobacterium profundum (strain SS9).